Here is a 469-residue protein sequence, read N- to C-terminus: Zinc transporter SLC39A7 (469 aa).

The helical transmembrane segment at 10–30 threads the bilayer; it reads WVAVGLLTWATLGLLVAGLGG. Composition is skewed to basic and acidic residues over residues 42–56 and 66–114; these read FHGHSHRHSHEDFHH and HTHE…EHSH. Residues 42 to 121 are disordered; sequence FHGHSHRHSH…HSHGGYGESG (80 aa). The residue at position 66 (His66) is a Pros-methylhistidine. 3 consecutive transmembrane segments (helical) span residues 138-158, 169-189, and 214-234; these read ALGATVLISAAPFFVLFLIPV, LQILLSFASGGLLGDAFLHLI, and GPILSVGLWVLSGIVAFLVVE. Residues 242–263 show a composition bias toward basic residues; that stretch reads GGHGHSHGHGHAHSHTRGSHGH. The tract at residues 242–310 is disordered; that stretch reads GGHGHSHGHG…VRPQNAEEEK (69 aa). Residues 264-285 show a composition bias toward basic and acidic residues; the sequence is GRQERSTKEKQSSEEEEKETRG. Phosphoserine; by CK2 occurs at positions 275 and 276. 2 consecutive transmembrane segments (helical) span residues 381 to 401 and 417 to 436; these read MRLQLLTAVGALAGTACALLT and GWVLPFTAGGFIYVATVSVL.

The protein belongs to the ZIP transporter (TC 2.A.5) family. KE4/Catsup subfamily. Homodimer. Rapidly phosphorylated by CK2 following Zn(2+) treatment. This phosphorylation is required for efficient cytosolic Zn(2+) release. Post-translationally, methylation at some His residue by METTL9 leads to reduced zinc-binding. Widely expressed.

It is found in the endoplasmic reticulum membrane. The protein localises to the golgi apparatus. Its subcellular location is the cis-Golgi network membrane. It catalyses the reaction Zn(2+)(in) = Zn(2+)(out). Phosphorylation activates zinc transport activity. Its function is as follows. Transports Zn(2+) from the endoplasmic reticulum (ER)/Golgi apparatus to the cytosol, playing an essential role in the regulation of cytosolic zinc levels. Acts as a gatekeeper of zinc release from intracellular stores, requiring post-translational activation by phosphorylation, resulting in activation of multiple downstream pathways leading to cell growth and proliferation. Has an essential role in B cell development and is required for proper B cell receptor signaling. Plays an important role in maintaining intestinal epithelial homeostasis and skin dermis development by regulating ER function. Controls cell signaling pathways involved in glucose metabolism in skeletal muscle. Has a protective role against ER stress in different biological contexts. Mediates Zn(2+)-induced ferroptosis. The polypeptide is Zinc transporter SLC39A7 (SLC39A7) (Homo sapiens (Human)).